The primary structure comprises 317 residues: Metaxin-1 (317 aa).

Residues K38, K41, and K78 each participate in a glycyl lysine isopeptide (Lys-Gly) (interchain with G-Cter in ubiquitin) cross-link. Residues 164–184 (EELEKELYREARECLTLLSQR) traverse the membrane as a helical segment.

The protein belongs to the metaxin family. In terms of assembly, interacts with MTX2/metaxin-2. Associates with the mitochondrial contact site and cristae organizing system (MICOS) complex, composed of at least MICOS10/MIC10, CHCHD3/MIC19, CHCHD6/MIC25, APOOL/MIC27, IMMT/MIC60, APOO/MIC23/MIC26 and QIL1/MIC13. This complex was also known under the names MINOS or MitOS complex. The MICOS complex associates with mitochondrial outer membrane proteins SAMM50, MTX1 and MTX2 (together described as components of the mitochondrial outer membrane sorting assembly machinery (SAM) complex) and DNAJC11, mitochondrial inner membrane protein TMEM11 and with HSPA9. The MICOS and SAM complexes together with DNAJC11 are part of a large protein complex spanning both membranes termed the mitochondrial intermembrane space bridging (MIB) complex. Interacts with ARMC1. Post-translationally, ubiquitinated by PRKN during mitophagy, leading to its degradation and enhancement of mitophagy. Deubiquitinated by USP30.

The protein resides in the mitochondrion outer membrane. Its function is as follows. Involved in transport of proteins into the mitochondrion. Essential for embryonic development. This chain is Metaxin-1 (MTX1), found in Macaca fascicularis (Crab-eating macaque).